The chain runs to 530 residues: Type 2 DNA topoisomerase 6 subunit B (530 aa).

ATP is bound by residues Asn-42, Asp-76, 97 to 98 (SK), 106 to 113 (GMYGLGVK), and Lys-427.

It belongs to the TOP6B family. As to quaternary structure, homodimer. Heterotetramer of two Top6A and two Top6B chains.

It carries out the reaction ATP-dependent breakage, passage and rejoining of double-stranded DNA.. Relaxes both positive and negative superturns and exhibits a strong decatenase activity. This Saccharolobus islandicus (strain Y.N.15.51 / Yellowstone #2) (Sulfolobus islandicus) protein is Type 2 DNA topoisomerase 6 subunit B.